Here is a 215-residue protein sequence, read N- to C-terminus: Pentapeptide repeat protein QnrB4 (215 aa).

2 Pentapeptide repeat domains span residues 25–104 (TFFN…SFMN) and 117–191 (ITNT…RGVD).

The protein belongs to the pentapeptide repeat protein family.

Its function is as follows. Probably plays a role in resistance to quinolone antibiotics. Only inhibits ATP-dependent DNA supercoiling by E.coli gyrase at high concentration (30 uM). Protects E.coli gyrase supercoiling activity from inhibition by fluoroquinolones (ciprofloxacin) at 0.1 uM, does not protect M.tuberculosis gyrase activity. This Escherichia coli protein is Pentapeptide repeat protein QnrB4.